Here is a 157-residue protein sequence, read N- to C-terminus: DNA gyrase inhibitor (157 aa).

This sequence belongs to the DNA gyrase inhibitor family. Interacts with DNA gyrase.

It localises to the cytoplasm. In terms of biological role, inhibits the supercoiling activity of DNA gyrase. Acts by inhibiting DNA gyrase at an early step, prior to (or at the step of) binding of DNA by the gyrase. It protects cells against toxins that target DNA gyrase, by inhibiting activity of these toxins and reducing the formation of lethal double-strand breaks in the cell. The sequence is that of DNA gyrase inhibitor from Klebsiella pneumoniae (strain 342).